The sequence spans 223 residues: Ribose-5-phosphate isomerase A (223 aa).

Residues 32–35 (TGST), 83–86 (DGAD), and 96–99 (KGGG) contribute to the substrate site. Glu-105 acts as the Proton acceptor in catalysis. Lys-123 serves as a coordination point for substrate.

The protein belongs to the ribose 5-phosphate isomerase family. As to quaternary structure, homodimer.

The catalysed reaction is aldehydo-D-ribose 5-phosphate = D-ribulose 5-phosphate. It functions in the pathway carbohydrate degradation; pentose phosphate pathway; D-ribose 5-phosphate from D-ribulose 5-phosphate (non-oxidative stage): step 1/1. Functionally, catalyzes the reversible conversion of ribose-5-phosphate to ribulose 5-phosphate. The chain is Ribose-5-phosphate isomerase A from Acinetobacter baumannii (strain AYE).